The sequence spans 200 residues: BmK-YA precursor (200 aa).

Positions 1–23 (MIFHQFYSILILCLIFPNQVVQS) are cleaved as a signal peptide. The propeptide occupies 24–34 (DKERQDWIPSD). Residues 30–200 (WIPSDYGGYM…GYMNPAGRSD (171 aa)) form a disordered region. At A42 the chain carries Alanine amide. Positions 45-100 (SDEERQDWIPSDYGGHMNPAGRSDEERQDWIPSDYGGHMNPAGRSNEERQDWIPSD) are excised as a propeptide. An Alanine amide modification is found at A108. Positions 111–144 (SDEERQDWIPSDYGGHMNPAGRSNEERQDWIPSD) are excised as a propeptide. A152 is subject to Alanine amide. Residues 155–188 (SDEERQDWIPSDYGGHMNPAGRSDEERQDWIPSD) constitute a propeptide that is removed on maturation. A196 carries the alanine amide modification. Positions 199–200 (SD) are excised as a propeptide.

As to expression, venom gland.

It is found in the secreted. Its function is as follows. Synthetic BmK-YA activates human opioid receptors in vitro, with highest activity on the delta-type/OPRD1 receptor (EC(50)=2.5 uM) and lower activity on mu-type/OPRM1 and kappa-type/OPRK1 receptors (EC(50)=17 uM and 30 uM, respectively). The protein is BmK-YA precursor of Olivierus martensii (Manchurian scorpion).